We begin with the raw amino-acid sequence, 291 residues long: Pyridoxal 5'-phosphate synthase subunit PdxS (291 aa).

Position 23 (Asp-23) interacts with D-ribose 5-phosphate. The active-site Schiff-base intermediate with D-ribose 5-phosphate is the Lys-80. Gly-152 lines the D-ribose 5-phosphate pocket. Arg-164 is a binding site for D-glyceraldehyde 3-phosphate. D-ribose 5-phosphate contacts are provided by residues Gly-213 and 234 to 235 (GS).

This sequence belongs to the PdxS/SNZ family. In the presence of PdxT, forms a dodecamer of heterodimers.

The catalysed reaction is aldehydo-D-ribose 5-phosphate + D-glyceraldehyde 3-phosphate + L-glutamine = pyridoxal 5'-phosphate + L-glutamate + phosphate + 3 H2O + H(+). The protein operates within cofactor biosynthesis; pyridoxal 5'-phosphate biosynthesis. In terms of biological role, catalyzes the formation of pyridoxal 5'-phosphate from ribose 5-phosphate (RBP), glyceraldehyde 3-phosphate (G3P) and ammonia. The ammonia is provided by the PdxT subunit. Can also use ribulose 5-phosphate and dihydroxyacetone phosphate as substrates, resulting from enzyme-catalyzed isomerization of RBP and G3P, respectively. This is Pyridoxal 5'-phosphate synthase subunit PdxS from Bifidobacterium adolescentis (strain ATCC 15703 / DSM 20083 / NCTC 11814 / E194a).